The primary structure comprises 432 residues: Alkaline protease secretion protein AprE (432 aa).

The Cytoplasmic segment spans residues 1–14; that stretch reads MTRTVKRDENAYAR. The chain crosses the membrane as a helical span at residues 15-36; it reads LGWLLVLFGFGGALLWAAFAPL. At 37–432 the chain is on the periplasmic side; it reads DQGVAVPATV…DRAHVALAEN (396 aa).

This sequence belongs to the membrane fusion protein (MFP) (TC 8.A.1) family.

It is found in the cell inner membrane. In terms of biological role, involved in the secretion of alkaline protease. The chain is Alkaline protease secretion protein AprE (aprE) from Pseudomonas aeruginosa (strain ATCC 15692 / DSM 22644 / CIP 104116 / JCM 14847 / LMG 12228 / 1C / PRS 101 / PAO1).